The primary structure comprises 48 residues: Cytochrome b559 subunit beta (48 aa).

Residues 23–39 (WLAVHALAIPSVFFLGA) form a helical membrane-spanning segment. Histidine 27 serves as a coordination point for heme.

The protein belongs to the PsbE/PsbF family. Heterodimer of an alpha subunit and a beta subunit. PSII is composed of 1 copy each of membrane proteins PsbA, PsbB, PsbC, PsbD, PsbE, PsbF, PsbH, PsbI, PsbJ, PsbK, PsbL, PsbM, PsbT, PsbX, PsbY, Psb30/Ycf12, peripheral proteins PsbO, CyanoQ (PsbQ), PsbU, PsbV and a large number of cofactors. It forms dimeric complexes. Requires heme b as cofactor.

The protein resides in the cellular thylakoid membrane. This b-type cytochrome is tightly associated with the reaction center of photosystem II (PSII). PSII is a light-driven water:plastoquinone oxidoreductase that uses light energy to abstract electrons from H(2)O, generating O(2) and a proton gradient subsequently used for ATP formation. It consists of a core antenna complex that captures photons, and an electron transfer chain that converts photonic excitation into a charge separation. In Prochlorococcus marinus (strain MIT 9515), this protein is Cytochrome b559 subunit beta.